Reading from the N-terminus, the 1479-residue chain is Type VII secretion system protein EssC (1479 aa).

Residues 1 to 229 (MHKLIIKYNK…RPPQPIQKNN (229 aa)) lie on the Cytoplasmic side of the membrane. A helical transmembrane segment spans residues 230–252 (TVIWRSIIPPLVMIALTVVIFLV). Residues 253–256 (RPIG) are Extracellular-facing. Residues 257–279 (IYILMMIGMSSVTIVFGITTYFS) traverse the membrane as a helical segment. Residues 280–1479 (EKKKYNKDVE…QAYQKIRWFK (1200 aa)) lie on the Cytoplasmic side of the membrane. FtsK domains are found at residues 652-846 (DDIL…QDSN) and 997-1183 (QGPM…SEVS). ATP is bound by residues 672 to 679 (GTTGSGKS) and 1014 to 1021 (GSPGYGRT).

The protein belongs to the EssC family. In terms of assembly, homooligomer. Interacts with EsaE.

The protein resides in the cell membrane. Its function is as follows. Component of the type VII secretion system (Ess). Required for the secretion of substrates including EsxA and EsxB. However, unable to support secretion of the substrate protein EsxC. This Staphylococcus aureus (strain MSSA476) protein is Type VII secretion system protein EssC.